The chain runs to 358 residues: Variant-surface-glycoprotein phospholipase C (358 aa).

In terms of domain architecture, PI-PLC X-box spans 25-198 (IGQVYMVGAH…STRRIFLVVR (174 aa)).

Monomer. The N-terminus is blocked.

Its subcellular location is the membrane. It carries out the reaction a 6-(alpha-D-glucosaminyl)-1-(1,2-diacyl-sn-glycero-3-phospho)-1D-myo-inositol = 6-(alpha-D-glucosaminyl)-1D-myo-inositol 1,2-cyclic phosphate + a 1,2-diacyl-sn-glycerol. In terms of biological role, by hydrolysis of the attached glycolipid, releases soluble variant surface glycoprotein containing phosphoinositol from the cell wall of T.brucei after cell lysis. It also cleaves similar membrane anchors on some mammalian proteins. VSG lipase may play a role in processes such as parasite differentiation or antigenic variation. This is Variant-surface-glycoprotein phospholipase C from Trypanosoma brucei brucei.